The primary structure comprises 765 residues: Endothelin-converting enzyme 2 (765 aa).

At 1–60 (MSVALQELGGGGNMVEYKRATLRDEDAPETPVEGGASPDAVEAGFRKRTSRLLGLHTQLE) the chain is on the cytoplasmic side. A helical; Signal-anchor for type II membrane protein transmembrane segment spans residues 61–81 (LVLAGVSLLLAALLLGCLVAL). The Lumenal segment spans residues 82–765 (GVQYHRDPSH…MNSGQLCEVW (684 aa)). In terms of domain architecture, Peptidase M13 spans 93–765 (TCLTEACIRV…MNSGQLCEVW (673 aa)). 5 disulfide bridges follow: C94/C99, C117/C750, C125/C710, C181/C430, and C639/C762. 7 N-linked (GlcNAc...) asparagine glycosylation sites follow: N161, N165, N206, N266, N311, N378, and N534. H602 contacts Zn(2+). Residue E603 is part of the active site. H606 serves as a coordination point for Zn(2+). 2 N-linked (GlcNAc...) asparagine glycosylation sites follow: N627 and N635. E662 is a binding site for Zn(2+). Residue D666 is the Proton donor of the active site.

Belongs to the peptidase M13 family. Zn(2+) is required as a cofactor. In terms of tissue distribution, isoform ECE2-1 and isoform ECE2-2 are expressed in brain and adrenal gland.

It is found in the golgi apparatus membrane. The protein resides in the cytoplasmic vesicle. The protein localises to the secretory vesicle membrane. It catalyses the reaction Hydrolysis of the 21-Trp-|-Val-22 bond in big endothelin to form endothelin 1.. Converts big endothelin-1 to endothelin-1. Also involved in the processing of various neuroendocrine peptides, including neurotensin, angiotensin I, substance P, proenkephalin-derived peptides, and prodynorphin-derived peptides. May play a role in amyloid-beta processing. This is Endothelin-converting enzyme 2 from Bos taurus (Bovine).